The primary structure comprises 348 residues: Glucokinase (348 aa).

Residue Gly-14–Ser-19 coordinates ATP. A disordered region spans residues Ser-327–Ala-348.

It belongs to the bacterial glucokinase family.

It localises to the cytoplasm. It carries out the reaction D-glucose + ATP = D-glucose 6-phosphate + ADP + H(+). The sequence is that of Glucokinase from Chromobacterium violaceum (strain ATCC 12472 / DSM 30191 / JCM 1249 / CCUG 213 / NBRC 12614 / NCIMB 9131 / NCTC 9757 / MK).